Here is a 413-residue protein sequence, read N- to C-terminus: uncharacterized protein (413 aa).

Disordered stretches follow at residues 108–158 and 232–257; these read ESVP…SKIS and DRLG…RLGA. The residue at position 115 (Ser-115) is a Phosphoserine. Residues 127-139 are compositionally biased toward polar residues; the sequence is SAASRMIANSLNH. Ser-141 is subject to Phosphoserine. Lys-239 is covalently cross-linked (Glycyl lysine isopeptide (Lys-Gly) (interchain with G-Cter in SUMO2)). Phosphoserine occurs at positions 269 and 296. The segment at 290-336 is disordered; that stretch reads RGPTKASAQPALTVKAKAASSATSTATTPKLRRLALPSRPGLQKKPD. Over residues 302–318 the composition is skewed to low complexity; the sequence is TVKAKAASSATSTATTP. At Ser-342 the chain carries Phosphoserine.

This is an uncharacterized protein from Mus musculus (Mouse).